We begin with the raw amino-acid sequence, 309 residues long: 2-phospho-L-lactate transferase (309 aa).

2 residues coordinate 7,8-didemethyl-8-hydroxy-5-deazariboflavin: Asp-50 and Lys-89.

Belongs to the CofD family. In terms of assembly, homodimer. Requires Mg(2+) as cofactor.

The catalysed reaction is (2S)-lactyl-2-diphospho-5'-guanosine + 7,8-didemethyl-8-hydroxy-5-deazariboflavin = oxidized coenzyme F420-0 + GMP + H(+). It functions in the pathway cofactor biosynthesis; coenzyme F420 biosynthesis. In terms of biological role, catalyzes the transfer of the 2-phospholactate moiety from (2S)-lactyl-2-diphospho-5'-guanosine to 7,8-didemethyl-8-hydroxy-5-deazariboflavin (FO) with the formation of oxidized coenzyme F420-0 and GMP. In Methanococcus maripaludis (strain C5 / ATCC BAA-1333), this protein is 2-phospho-L-lactate transferase.